Reading from the N-terminus, the 489-residue chain is MTSSSVRVRFCPSPTGIPHVGMVRTALFNWAYARHTGGTFVFRIEDTDAARDSEESYLALLDALRWLGLDWDEGPEVDGPYGPYRQSQRTEIYHDVVAKLLTAGEAYYAFSTPEEVEARHIAAGRNPKLGYDNFDRQLTDSQRAAYLAEGRKPVVRLRMPDTDLAWHDLVRGPTTFAAGSVPDFALTRATGDPLYTLVNPCDDALMKITHVLRGEDLLPSTPRQIALYQALMRIGIAERVPEFAHLPTVLGEGTKKLSKRDPQSNLFAHRDRGFIPEGLLNYLALLGWAIADDHDLFSLDEMVAAFDVADVNSNPARFDQKKADAINAEHIRMLDVADFTARLRAYLDTHGHQLALDDAAFAVAAELVQTRIVVLEDAWALLKFLNDDRYAIDPKAAAKELGPDAGPVLDAAIAALDGAADWTTADIEAALKTALIEGMALKPRKAFGPIRVAATGTTVSPPLFESLELLGRERSLGRLRSARDQVGSP.

A 'HIGH' region motif is present at residues 12–22; it reads PSPTGIPHVGM. The 'KMSKS' region signature appears at 256 to 260; it reads KLSKR. Lysine 259 contributes to the ATP binding site.

It belongs to the class-I aminoacyl-tRNA synthetase family. Glutamate--tRNA ligase type 1 subfamily. As to quaternary structure, monomer.

It localises to the cytoplasm. The catalysed reaction is tRNA(Glu) + L-glutamate + ATP = L-glutamyl-tRNA(Glu) + AMP + diphosphate. Catalyzes the attachment of glutamate to tRNA(Glu) in a two-step reaction: glutamate is first activated by ATP to form Glu-AMP and then transferred to the acceptor end of tRNA(Glu). This is Glutamate--tRNA ligase from Mycobacterium marinum (strain ATCC BAA-535 / M).